The primary structure comprises 294 residues: UDP-3-O-acyl-N-acetylglucosamine deacetylase (294 aa).

3 residues coordinate Zn(2+): His75, His232, and Asp236. His259 functions as the Proton donor in the catalytic mechanism.

Belongs to the LpxC family. The cofactor is Zn(2+).

It carries out the reaction a UDP-3-O-[(3R)-3-hydroxyacyl]-N-acetyl-alpha-D-glucosamine + H2O = a UDP-3-O-[(3R)-3-hydroxyacyl]-alpha-D-glucosamine + acetate. The protein operates within glycolipid biosynthesis; lipid IV(A) biosynthesis; lipid IV(A) from (3R)-3-hydroxytetradecanoyl-[acyl-carrier-protein] and UDP-N-acetyl-alpha-D-glucosamine: step 2/6. In terms of biological role, catalyzes the hydrolysis of UDP-3-O-myristoyl-N-acetylglucosamine to form UDP-3-O-myristoylglucosamine and acetate, the committed step in lipid A biosynthesis. This Campylobacter jejuni subsp. jejuni serotype O:23/36 (strain 81-176) protein is UDP-3-O-acyl-N-acetylglucosamine deacetylase.